Here is a 464-residue protein sequence, read N- to C-terminus: Nuclear distribution protein nudF 2 (464 aa).

In terms of domain architecture, LisH spans 9 to 41 (QAAELNKSIIAYLSAHGLAETLAAFRKESDFPD). The stretch at 63-88 (NSTLMKKLLALESHNKALRNELNSTR) forms a coiled coil. WD repeat units lie at residues 112 to 151 (SHRD…LERT), 154 to 195 (GHTM…KNVK), 199 to 238 (GHDH…RVKT), 241 to 280 (DHTG…PICK), 285 to 343 (GHEN…MTLT), 344 to 383 (GHAS…RCVK), 388 to 424 (AHDG…AELP), and 426 to 464 (SKLD…RSHK).

It belongs to the WD repeat LIS1/nudF family. As to quaternary structure, self-associates. Interacts with nudE and dynein.

The protein resides in the cytoplasm. It is found in the cytoskeleton. The protein localises to the spindle pole. In terms of biological role, positively regulates the activity of the minus-end directed microtubule motor protein dynein. May enhance dynein-mediated microtubule sliding by targeting dynein to the microtubule plus end. Required for nuclear migration during vegetative growth as well as development. Required for retrograde early endosome (EE) transport from the hyphal tip. Required for localization of dynein to the mitotic spindle poles. Recruits additional proteins to the dynein complex at SPBs. The polypeptide is Nuclear distribution protein nudF 2 (Penicillium rubens (strain ATCC 28089 / DSM 1075 / NRRL 1951 / Wisconsin 54-1255) (Penicillium chrysogenum)).